The chain runs to 124 residues: Large ribosomal subunit protein eL31 (124 aa).

Y102 is subject to Phosphotyrosine.

Belongs to the eukaryotic ribosomal protein eL31 family.

This chain is Large ribosomal subunit protein eL31 (RpL31), found in Drosophila melanogaster (Fruit fly).